Consider the following 256-residue polypeptide: 5-keto-4-deoxy-D-glucarate aldolase (256 aa).

The active-site Proton acceptor is His-50. Position 151 (Gln-151) interacts with substrate. Residue Glu-153 participates in Mg(2+) binding. 2 residues coordinate substrate: Ser-178 and Asp-179. Asp-179 serves as a coordination point for Mg(2+).

It belongs to the HpcH/HpaI aldolase family. KDGluc aldolase subfamily. In terms of assembly, homohexamer; trimer of dimers. Mg(2+) is required as a cofactor.

It carries out the reaction 5-dehydro-4-deoxy-D-glucarate = 2-hydroxy-3-oxopropanoate + pyruvate. It catalyses the reaction 2-dehydro-3-deoxy-D-glucarate = 2-hydroxy-3-oxopropanoate + pyruvate. Its pathway is carbohydrate acid metabolism; galactarate degradation; D-glycerate from galactarate: step 2/3. Catalyzes the reversible retro-aldol cleavage of both 5-keto-4-deoxy-D-glucarate and 2-keto-3-deoxy-D-glucarate to pyruvate and tartronic semialdehyde. In Klebsiella pneumoniae subsp. pneumoniae (strain ATCC 700721 / MGH 78578), this protein is 5-keto-4-deoxy-D-glucarate aldolase.